The following is a 103-amino-acid chain: Large ribosomal subunit protein bL21 (103 aa).

The protein belongs to the bacterial ribosomal protein bL21 family. As to quaternary structure, part of the 50S ribosomal subunit. Contacts protein L20.

Functionally, this protein binds to 23S rRNA in the presence of protein L20. This chain is Large ribosomal subunit protein bL21, found in Shewanella amazonensis (strain ATCC BAA-1098 / SB2B).